A 141-amino-acid chain; its full sequence is Large ribosomal subunit protein uL11 (141 aa).

Belongs to the universal ribosomal protein uL11 family. Part of the ribosomal stalk of the 50S ribosomal subunit. Interacts with L10 and the large rRNA to form the base of the stalk. L10 forms an elongated spine to which L12 dimers bind in a sequential fashion forming a multimeric L10(L12)X complex. In terms of processing, one or more lysine residues are methylated.

Its function is as follows. Forms part of the ribosomal stalk which helps the ribosome interact with GTP-bound translation factors. The sequence is that of Large ribosomal subunit protein uL11 from Prosthecochloris aestuarii (strain DSM 271 / SK 413).